A 351-amino-acid chain; its full sequence is Anthranilate phosphoribosyltransferase (351 aa).

5-phospho-alpha-D-ribose 1-diphosphate contacts are provided by residues glycine 84, 87-88 (GD), 95-98 (NISS), 113-121 (KHGNRGASS), and alanine 125. Glycine 84 is an anthranilate binding site. Serine 97 contacts Mg(2+). Asparagine 116 contributes to the anthranilate binding site. Arginine 171 is a binding site for anthranilate. Residues aspartate 229 and lysine 230 each coordinate Mg(2+).

The protein belongs to the anthranilate phosphoribosyltransferase family. In terms of assembly, homodimer. Mg(2+) is required as a cofactor.

It carries out the reaction N-(5-phospho-beta-D-ribosyl)anthranilate + diphosphate = 5-phospho-alpha-D-ribose 1-diphosphate + anthranilate. It participates in amino-acid biosynthesis; L-tryptophan biosynthesis; L-tryptophan from chorismate: step 2/5. Its function is as follows. Catalyzes the transfer of the phosphoribosyl group of 5-phosphorylribose-1-pyrophosphate (PRPP) to anthranilate to yield N-(5'-phosphoribosyl)-anthranilate (PRA). The polypeptide is Anthranilate phosphoribosyltransferase (Clavibacter sepedonicus (Clavibacter michiganensis subsp. sepedonicus)).